The sequence spans 89 residues: Putative membrane protein insertion efficiency factor (89 aa).

The disordered stretch occupies residues Val68 to Leu89. The segment covering Asn77 to Leu89 has biased composition (basic and acidic residues).

This sequence belongs to the UPF0161 family.

It localises to the cell inner membrane. Its function is as follows. Could be involved in insertion of integral membrane proteins into the membrane. This Burkholderia mallei (strain SAVP1) protein is Putative membrane protein insertion efficiency factor.